The following is a 505-amino-acid chain: MMKFSDTASCRDGGERPEEEGKGAGGRSKLRMGKEEFTGSVGKEEAAAVASMSSSKDRICSTSTQLSQLHGFPPSMYPFAFSSNMRGSPPFDLTNGGAYFRSFPTDLPKEMASLSVETQSTSSEEMVPSSPSPPPPPRVYKPCFVCNDKSSGYHYGVSSCEGCKGFFRRSIQKNMVYTCHRDKNCQINKVTRNRCQYCRLQKCFEVGMSKEAVRNDRNKKKKEIKEEVVTDSYEMPPEMEALIQKVSKAHQETFPSLCQLGKYTTNSSADHRVQLDLGLWHKFSELATKCIIKIVEFAKRLPGFATLTIADQITLLKAACLDILMLRICTRYTPEQDTMTFSDGLTLNRTQMHNAGFGPLTDLVFAFAEQLLPLEMDDTETGLLSAICLICGDRMDLEEPEKVDKLQEPLLEALKIYARRRRPNKPYMFPRMLMKITDLRGISTKGAERAITLKMEIPGPMPPLIREMLENPEAFEDDASPPPKSEQKPIKVEEKPGEKTSTKDP.

2 disordered regions span residues 1–57 and 113–134; these read MMKF…SSKD and SLSV…PSPP. Basic and acidic residues-rich tracts occupy residues 12 to 22 and 32 to 46; these read DGGERPEEEGK and MGKE…KEEA. Residues 52 to 142 form a modulating region; that stretch reads MSSSKDRICS…PPPPPRVYKP (91 aa). Polar residues predominate over residues 115 to 124; it reads SVETQSTSSE. 2 NR C4-type zinc fingers span residues 143–163 and 179–203; these read CFVC…CEGC and CHRD…LQKC. The segment at residues 143–208 is a DNA-binding region (nuclear receptor); it reads CFVCNDKSSG…RLQKCFEVGM (66 aa). Residues 209 to 237 are hinge; it reads SKEAVRNDRNKKKKEIKEEVVTDSYEMPP. The region spanning 238–472 is the NR LBD domain; it reads EMEALIQKVS…PLIREMLENP (235 aa). Residues 462–505 are disordered; sequence PPLIREMLENPEAFEDDASPPPKSEQKPIKVEEKPGEKTSTKDP. Residues 485–505 show a composition bias toward basic and acidic residues; it reads SEQKPIKVEEKPGEKTSTKDP.

This sequence belongs to the nuclear hormone receptor family. NR1 subfamily. As to quaternary structure, heterodimer; with a RXR molecule. Binds DNA preferentially as a RAR/RXR heterodimer. In terms of tissue distribution, isoform Delta-1A and Isoform Delta-1B are most abundant in regenerating limbs, tails, and the anterior half of the lower jaw. Isoform Delta-2 is broadly and uniformly distributed.

It is found in the nucleus. Functionally, receptor for retinoic acid. Retinoic acid receptors bind as heterodimers to their target response elements in response to their ligands, all-trans or 9-cis retinoic acid, and regulate gene expression in various biological processes. The RAR/RXR heterodimers bind to the retinoic acid response elements (RARE) composed of tandem 5'-AGGTCA-3' sites known as DR1-DR5. The sequence is that of Retinoic acid receptor gamma (RARG) from Notophthalmus viridescens (Eastern newt).